The sequence spans 80 residues: Protein transport protein SSS1 (80 aa).

At 1-46 (MARASEKGEEKKQSNNQVEKLVEAPVEFVREGTQFLAKCKKPDLKE) the chain is on the cytoplasmic side. The helical transmembrane segment at 47 to 75 (YTKIVKAVGIGFIAVGIIGYAIKLIHIPI) threads the bilayer. At 76–80 (RYVIV) the chain is on the extracellular side.

It belongs to the SecE/SEC61-gamma family. Component of the heterotrimeric Sec61 complex, which is composed of SSH1, SBH1 and SSS1. Presumably three to four Sec61 heterotrimers assemble into an oligomeric ring with a central aqueous pore. In cotranslational ER import, the pore diameter varies from 9-15 A in a ribosome-free resting state to 40-60 A in a functional state when associated with the ribosome. The Sec61 complex is part of a channel-forming translocon complex whose composition seem to change dependent upon different functional states. During post-translational ER import the Sec61 complex associates with the Sec62/63 complex to form the Sec complex. SSH1 is a component of the heterotrimeric Ssh1 complex, which is composed of SSH1, SBH2 and SSS1. SSS1 interacts with OST1, OST4, SWP1 and WBP1, components of the OT complex.

The protein localises to the endoplasmic reticulum membrane. Functionally, part of the Sec61 complex, which is the major component of channel-forming translocon complex that mediates protein translocation across the endoplasmic reticulum (ER). The functional states of the translocon complex include co- and post-translational ER import, cotranslational membrane protein integration and retrograde transport of misfolded proteins out of the ER. In the cotranslational pathway, ribosomes synthesizing presecretory proteins are targeted to the translocon by the cytosolic signal recognition particle (SRP) and its ER-localized receptor. The association of the Sec61 complex with the ribosome is mediated by the 28S rRNA of the large ribosomal subunit. SRP-independent post-translational translocation requires the association of additional factors, such as the Sec62/63 complex and KAR2. Also part of the Ssh1 complex, which probably is the major component of a channel-forming translocon complex that may function exclusively in the cotranslational pathway of protein ER import. In Saccharomyces cerevisiae (strain ATCC 204508 / S288c) (Baker's yeast), this protein is Protein transport protein SSS1 (SSS1).